The primary structure comprises 295 residues: Nucleotide-binding protein YvcJ (295 aa).

Position 16–23 (Gly16–Thr23) interacts with ATP. Asp67–Gly70 provides a ligand contact to GTP.

The protein belongs to the RapZ-like family.

Displays ATPase and GTPase activities. Can also hydrolyze pNPP. May affect the expression of competence via the phosphorylation of a cellular component. The chain is Nucleotide-binding protein YvcJ (yvcJ) from Bacillus subtilis (strain 168).